Reading from the N-terminus, the 376-residue chain is Succinyl-diaminopimelate desuccinylase (376 aa).

Histidine 66 provides a ligand contact to Zn(2+). Aspartate 68 is an active-site residue. Position 99 (aspartate 99) interacts with Zn(2+). Catalysis depends on glutamate 133, which acts as the Proton acceptor. Zn(2+) contacts are provided by glutamate 134, glutamate 162, and histidine 348.

Belongs to the peptidase M20A family. DapE subfamily. Homodimer. Zn(2+) serves as cofactor. Requires Co(2+) as cofactor.

It carries out the reaction N-succinyl-(2S,6S)-2,6-diaminopimelate + H2O = (2S,6S)-2,6-diaminopimelate + succinate. It functions in the pathway amino-acid biosynthesis; L-lysine biosynthesis via DAP pathway; LL-2,6-diaminopimelate from (S)-tetrahydrodipicolinate (succinylase route): step 3/3. Functionally, catalyzes the hydrolysis of N-succinyl-L,L-diaminopimelic acid (SDAP), forming succinate and LL-2,6-diaminopimelate (DAP), an intermediate involved in the bacterial biosynthesis of lysine and meso-diaminopimelic acid, an essential component of bacterial cell walls. This is Succinyl-diaminopimelate desuccinylase from Xanthomonas oryzae pv. oryzae (strain PXO99A).